The sequence spans 87 residues: MAVKIRLARHGAKKRPFYRIVVTDSESPRDGRFIEIVGTYNPVAEPAQIDLKDERIKHWMESGALPTHTVRNILKNQGFFSEAPQEA.

The protein belongs to the bacterial ribosomal protein bS16 family.

This Desulfatibacillum aliphaticivorans protein is Small ribosomal subunit protein bS16.